Here is a 383-residue protein sequence, read N- to C-terminus: DNA-directed RNA polymerase subunit alpha (383 aa).

An alpha N-terminal domain (alpha-NTD) region spans residues 1 to 240; sequence MEKKTGLIQF…NLFHQISPPL (240 aa). The segment at 306–383 is alpha C-terminal domain (alpha-CTD); sequence IDKQMNDSVN…RFNMELLPTK (78 aa).

This sequence belongs to the RNA polymerase alpha chain family. In plastids the minimal PEP RNA polymerase catalytic core is composed of four subunits: alpha, beta, beta', and beta''. When a (nuclear-encoded) sigma factor is associated with the core the holoenzyme is formed, which can initiate transcription.

It localises to the plastid. The protein localises to the chloroplast. It carries out the reaction RNA(n) + a ribonucleoside 5'-triphosphate = RNA(n+1) + diphosphate. In terms of biological role, DNA-dependent RNA polymerase catalyzes the transcription of DNA into RNA using the four ribonucleoside triphosphates as substrates. This Staurastrum punctulatum (Green alga) protein is DNA-directed RNA polymerase subunit alpha.